A 561-amino-acid chain; its full sequence is Arginine--tRNA ligase (561 aa).

A 'HIGH' region motif is present at residues A129–H139.

It belongs to the class-I aminoacyl-tRNA synthetase family. As to quaternary structure, monomer.

It is found in the cytoplasm. The enzyme catalyses tRNA(Arg) + L-arginine + ATP = L-arginyl-tRNA(Arg) + AMP + diphosphate. This chain is Arginine--tRNA ligase, found in Geotalea daltonii (strain DSM 22248 / JCM 15807 / FRC-32) (Geobacter daltonii).